Reading from the N-terminus, the 61-residue chain is MLILTRKIGESLLIGDDVEITVLSIRGSQVKLGVKAPKEISVHREEIYQRIKVLADENPSE.

Belongs to the CsrA/RsmA family. As to quaternary structure, homodimer; the beta-strands of each monomer intercalate to form a hydrophobic core, while the alpha-helices form wings that extend away from the core.

Its subcellular location is the cytoplasm. Functionally, a key translational regulator that binds mRNA to regulate translation initiation and/or mRNA stability. Mediates global changes in gene expression, shifting from rapid growth to stress survival by linking envelope stress, the stringent response and the catabolite repression systems. Usually binds in the 5'-UTR; binding at or near the Shine-Dalgarno sequence prevents ribosome-binding, repressing translation, binding elsewhere in the 5'-UTR can activate translation and/or stabilize the mRNA. Its function is antagonized by small RNA(s). This is Translational regulator CsrA from Glaesserella parasuis serovar 5 (strain SH0165) (Haemophilus parasuis).